A 341-amino-acid chain; its full sequence is tRNA N6-adenosine threonylcarbamoyltransferase (341 aa).

Fe cation is bound by residues H115 and H119. Substrate-binding positions include 137-141 (IVSGG), D170, G183, D187, and N276. Residue D304 coordinates Fe cation.

The protein belongs to the KAE1 / TsaD family. Requires Fe(2+) as cofactor.

It localises to the cytoplasm. It carries out the reaction L-threonylcarbamoyladenylate + adenosine(37) in tRNA = N(6)-L-threonylcarbamoyladenosine(37) in tRNA + AMP + H(+). Required for the formation of a threonylcarbamoyl group on adenosine at position 37 (t(6)A37) in tRNAs that read codons beginning with adenine. Is involved in the transfer of the threonylcarbamoyl moiety of threonylcarbamoyl-AMP (TC-AMP) to the N6 group of A37, together with TsaE and TsaB. TsaD likely plays a direct catalytic role in this reaction. The sequence is that of tRNA N6-adenosine threonylcarbamoyltransferase from Staphylococcus aureus (strain bovine RF122 / ET3-1).